Consider the following 1382-residue polypeptide: Hepatocyte growth factor receptor (1382 aa).

The N-terminal stretch at 1-24 (MKAPAVLAPGILVLLFTLVQKSYG) is a signal peptide. Topologically, residues 25–933 (ECREALVKSE…VIVQPDQNFT (909 aa)) are extracellular. One can recognise a Sema domain in the interval 27–516 (REALVKSEMN…TGKKITKIPL (490 aa)). Asn-45 carries N-linked (GlcNAc...) asparagine glycosylation. 4 disulfide bridges follow: Cys-95–Cys-101, Cys-98–Cys-160, Cys-133–Cys-141, and Cys-173–Cys-176. An N-linked (GlcNAc...) asparagine glycan is attached at Asn-106. 2 N-linked (GlcNAc...) asparagine glycosylation sites follow: Asn-203 and Asn-359. Cystine bridges form between Cys-299–Cys-364 and Cys-386–Cys-398. 2 N-linked (GlcNAc...) asparagine glycosylation sites follow: Asn-400 and Asn-406. Cystine bridges form between Cys-521–Cys-539, Cys-527–Cys-562, Cys-530–Cys-546, and Cys-542–Cys-552. IPT/TIG domains follow at residues 564–656 (PTIY…FSYV), 658–740 (PVIT…FSYQ), and 743–837 (PIVY…LIYV). O-linked (Man) threonine glycosylation is present at Thr-583. 2 N-linked (GlcNAc...) asparagine glycosylation sites follow: Asn-608 and Asn-636. 2 O-linked (Man) threonine glycosylation sites follow: Thr-677 and Thr-762. Asn-786, Asn-880, and Asn-931 each carry an N-linked (GlcNAc...) asparagine glycan. The helical transmembrane segment at 934-956 (GLIVGVISISIILLLLLGVFLWL) threads the bilayer. At 957–1382 (KKRKQIKDLG…QDNIDGEGDT (426 aa)) the chain is on the cytoplasmic side. Ser-967 carries the phosphoserine modification. Thr-978 is modified (phosphothreonine). Residues Ser-991, Ser-998, and Ser-1001 each carry the phosphoserine modification. Tyr-1004 carries the post-translational modification Phosphotyrosine. Residues 1079 to 1346 (VHFNEVIGRG…RISAIFSTFI (268 aa)) enclose the Protein kinase domain. Residues 1085–1093 (IGRGHFGCV) and Lys-1111 each bind ATP. The active-site Proton acceptor is Asp-1205. The segment at 1213–1382 (LDEKFTVKVA…QDNIDGEGDT (170 aa)) is interaction with RANBP9. At Tyr-1231 the chain carries Phosphotyrosine. A phosphotyrosine; by autocatalysis mark is found at Tyr-1235 and Tyr-1236. Phosphothreonine is present on Thr-1290. Positions 1321 to 1360 (WHPKAELRPSFSELVSRISAIFSTFIGEHYVHVNATYVNV) are interaction with MUC20. 2 positions are modified to phosphotyrosine; by autocatalysis: Tyr-1350 and Tyr-1357. Tyr-1366 is subject to Phosphotyrosine.

It belongs to the protein kinase superfamily. Tyr protein kinase family. In terms of assembly, heterodimer made of an alpha chain (50 kDa) and a beta chain (145 kDa) which are disulfide linked. Binds PLXNB1. Interacts when phosphorylated with downstream effectors including STAT3, PIK3R1, SRC, PCLG1, GRB2 and GAB1. Interacts with SPSB1, SPSB2 and SPSB4. Interacts with INPP5D/SHIP1. When phosphorylated at Tyr-1357, interacts with INPPL1/SHIP2. Interacts with RANBP9 and RANBP10, as well as SPSB1, SPSB2, SPSB3 and SPSB4. SPSB1 binding occurs in the presence and in the absence of HGF, however HGF treatment has a positive effect on this interaction. Interacts with MUC20; prevents interaction with GRB2 and suppresses hepatocyte growth factor-induced cell proliferation. Interacts with GRB10. Interacts with PTPN1 and PTPN2. Interacts with HSP90AA1 and HSP90AB1; the interaction suppresses MET kinase activity. Interacts with tensin TNS3. Interacts (when phosphorylated) with tensin TNS4 (via SH2 domain); the interaction increases MET protein stability by inhibiting MET endocytosis and subsequent lysosomal degradation. Autophosphorylated in response to ligand binding on Tyr-1235 and Tyr-1236 in the kinase domain leading to further phosphorylation of Tyr-1350 and Tyr-1357 in the C-terminal multifunctional docking site. Dephosphorylated by PTPRJ at Tyr-1350 and Tyr-1366. Dephosphorylated by PTPN1 and PTPN2. Post-translationally, ubiquitinated. Ubiquitination by CBL regulates the receptor stability and activity through proteasomal degradation. In terms of processing, O-mannosylation of IPT/TIG domains by TMEM260 is required for protein maturation. O-mannosylated residues are composed of single mannose glycans that are not elongated or modified.

The protein localises to the membrane. It carries out the reaction L-tyrosyl-[protein] + ATP = O-phospho-L-tyrosyl-[protein] + ADP + H(+). Its activity is regulated as follows. In its inactive state, the C-terminal tail interacts with the catalytic domain and inhibits the kinase activity. Upon ligand binding, the C-terminal tail is displaced and becomes phosphorylated, thus increasing the kinase activity. Functionally, receptor tyrosine kinase that transduces signals from the extracellular matrix into the cytoplasm by binding to hepatocyte growth factor/HGF ligand. Regulates many physiological processes including proliferation, scattering, morphogenesis and survival. Ligand binding at the cell surface induces autophosphorylation of MET on its intracellular domain that provides docking sites for downstream signaling molecules. Following activation by ligand, interacts with the PI3-kinase subunit PIK3R1, PLCG1, SRC, GRB2, STAT3 or the adapter GAB1. Recruitment of these downstream effectors by MET leads to the activation of several signaling cascades including the RAS-ERK, PI3 kinase-AKT, or PLCgamma-PKC. The RAS-ERK activation is associated with the morphogenetic effects while PI3K/AKT coordinates prosurvival effects. During embryonic development, MET signaling plays a role in gastrulation, development and migration of muscles and neuronal precursors, angiogenesis and kidney formation. In adults, participates in wound healing as well as organ regeneration and tissue remodeling. Also promotes differentiation and proliferation of hematopoietic cells. In Felis catus (Cat), this protein is Hepatocyte growth factor receptor (MET).